A 354-amino-acid chain; its full sequence is Ferrochelatase (354 aa).

Residues histidine 214 and glutamate 295 each coordinate Fe cation.

It belongs to the ferrochelatase family.

The protein resides in the cytoplasm. It carries out the reaction heme b + 2 H(+) = protoporphyrin IX + Fe(2+). It functions in the pathway porphyrin-containing compound metabolism; protoheme biosynthesis; protoheme from protoporphyrin-IX: step 1/1. In terms of biological role, catalyzes the ferrous insertion into protoporphyrin IX. In Burkholderia vietnamiensis (strain G4 / LMG 22486) (Burkholderia cepacia (strain R1808)), this protein is Ferrochelatase.